A 309-amino-acid polypeptide reads, in one-letter code: Probable pyridoxal 5'-phosphate synthase subunit PDX1 (309 aa).

Aspartate 40 provides a ligand contact to D-ribose 5-phosphate. Lysine 97 serves as the catalytic Schiff-base intermediate with D-ribose 5-phosphate. Glycine 169 provides a ligand contact to D-ribose 5-phosphate. Residue arginine 181 participates in D-glyceraldehyde 3-phosphate binding. Residues glycine 230 and 251–252 (GS) each bind D-ribose 5-phosphate.

It belongs to the PdxS/SNZ family.

The catalysed reaction is aldehydo-D-ribose 5-phosphate + D-glyceraldehyde 3-phosphate + L-glutamine = pyridoxal 5'-phosphate + L-glutamate + phosphate + 3 H2O + H(+). Its pathway is cofactor biosynthesis; pyridoxal 5'-phosphate biosynthesis. Catalyzes the formation of pyridoxal 5'-phosphate from ribose 5-phosphate (RBP), glyceraldehyde 3-phosphate (G3P) and ammonia. The ammonia is provided by PDX2. Can also use ribulose 5-phosphate and dihydroxyacetone phosphate as substrates, resulting from enzyme-catalyzed isomerization of RBP and G3P, respectively. Also plays an indirect role in resistance to singlet oxygen-generating photosensitizers. This Ginkgo biloba (Ginkgo) protein is Probable pyridoxal 5'-phosphate synthase subunit PDX1 (PDX1).